Reading from the N-terminus, the 142-residue chain is Large ribosomal subunit protein uL13 (142 aa).

This sequence belongs to the universal ribosomal protein uL13 family. Part of the 50S ribosomal subunit.

This protein is one of the early assembly proteins of the 50S ribosomal subunit, although it is not seen to bind rRNA by itself. It is important during the early stages of 50S assembly. This chain is Large ribosomal subunit protein uL13, found in Psychrobacter sp. (strain PRwf-1).